The sequence spans 229 residues: Cytochrome b translational activator protein CBS1, mitochondrial (229 aa).

The N-terminal 25 residues, 1 to 25 (MLRTKVFATTVARISGIRRYIPIRT), are a transit peptide targeting the mitochondrion.

The protein resides in the mitochondrion inner membrane. Its function is as follows. mRNA-specific translational activator of cytochrome b. The cytochrome b (COB) leader RNA may represent the target sequence for CBS1 and CBS2, tethering the COB mRNA to the inner mitochondrial membrane, where cotranslational insertion of cytochrome b into the membrane can occur. In Saccharomyces cerevisiae (strain ATCC 204508 / S288c) (Baker's yeast), this protein is Cytochrome b translational activator protein CBS1, mitochondrial (CBS1).